Consider the following 372-residue polypeptide: MGTTEATLRMENVDVRDEWQDEDLPRPLPEDTGVERLGGAVEDSSSPPSTLNLSGAHRKRKTLVAPEINISLDQSEGSLLSDDFLDTPDDLDINVDDIETPDETDSLEFLGNGNELEWEDDTPVATAKNMPGDSADLFGDGSAEDGSAANGRLWRTVIIGEQEHRIDLHMIRPYMKVVTHGGYYGEGLNAIIVFAACFLPDSSSPDYHYIMENLFLYVISSLELLVAEDYMIVYLNGATPRRRMPGIGWLKKCYHMIDRRLRKNLKSLIIVHPSWFIRTVLAISRPFISVKFISKIQYVHSLEELERLIPMEHVQLPDCVLQYEEQRLRAKRESTRPPQPEFLLPRSEEKPETVEEEDRAAEATEDQETSMS.

The segment at 1–58 is disordered; it reads MGTTEATLRMENVDVRDEWQDEDLPRPLPEDTGVERLGGAVEDSSSPPSTLNLSGAHR. Over residues 11-29 the composition is skewed to basic and acidic residues; that stretch reads ENVDVRDEWQDEDLPRPLP. Residues 43–53 are compositionally biased toward polar residues; sequence DSSSPPSTLNL. Phosphoserine is present on Ser-54. The interval 115 to 120 is required for interaction with KLC1; that stretch reads ELEWED. The 158-residue stretch at 171-328 folds into the CRAL-TRIO domain; that stretch reads IRPYMKVVTH…CVLQYEEQRL (158 aa). The mediates interaction with GLS stretch occupies residues 190 to 372; sequence AIIVFAACFL…ATEDQETSMS (183 aa). A disordered region spans residues 329-372; that stretch reads RAKRESTRPPQPEFLLPRSEEKPETVEEEDRAAEATEDQETSMS. Positions 354–372 are enriched in acidic residues; sequence VEEEDRAAEATEDQETSMS.

Interacts with KLC1; may link mitochondria to KLC1 and regulate mitochondria localization into neuron projections. Interacts with GLS; the interaction is direct and may control GLS localization, negatively regulating its activity. Interacts with PIN1 (via WW domain); upon NGF stimulation. The interaction with PIN1 and GLS is competitive. In terms of processing, cleaved by CASP3 and CASP7. The potential C-terminal product released by CASP3 cleavage may inhibit the ERK signaling pathway through MAP2K2. May be ubiquitinated by STUB1. In terms of tissue distribution, neuronal tissues specific. Strongly expressed in brain. Expressed in virtually all parts of the adult brain, including cortex, cerebellum and olfactory bulbs. Enriched in hippocampus, cerebellar cortex, deep cerebellar nuclei, and pontine nuclei (at protein level).

It localises to the cell projection. Its subcellular location is the axon. It is found in the dendrite. The protein resides in the presynapse. The protein localises to the mitochondrion. It localises to the growth cone. Its subcellular location is the cytoplasm. Functions in the development of neural tissues, particularly the postnatal maturation of the cerebellar cortex. May play a role in neurotransmission through regulation of glutaminase/GLS, an enzyme responsible for the production in neurons of the glutamate neurotransmitter. Alternatively, may regulate the localization of mitochondria within axons and dendrites. The polypeptide is Caytaxin (Atcay) (Mus musculus (Mouse)).